A 575-amino-acid polypeptide reads, in one-letter code: Dual specificity protein phosphatase YVH1 (575 aa).

A disordered region spans residues 185 to 213 (KHNNNNNNNNNNNNNNNNNNNNNNCCTFK). Low complexity predominate over residues 187–208 (NNNNNNNNNNNNNNNNNNNNNN). Residues 283 to 435 (NYKINQEEDT…LLLYEKMNYT (153 aa)) enclose the Tyrosine-protein phosphatase domain. C379 functions as the Phosphocysteine intermediate in the catalytic mechanism. Residues C476 and C530 each contribute to the Zn(2+) site.

Belongs to the protein-tyrosine phosphatase family. Non-receptor class dual specificity subfamily. As to quaternary structure, interacts with PES. The cofactor is Zn(2+).

It is found in the cytoplasm. It localises to the nucleus. The enzyme catalyses O-phospho-L-tyrosyl-[protein] + H2O = L-tyrosyl-[protein] + phosphate. The catalysed reaction is O-phospho-L-seryl-[protein] + H2O = L-seryl-[protein] + phosphate. Its function is as follows. Dual specificity protein phosphatase which dephosphorylates both phosphotyrosine and phosphoserine residues. This is Dual specificity protein phosphatase YVH1 from Plasmodium falciparum (isolate 3D7).